Consider the following 356-residue polypeptide: Tyrosine recombinase XerS (356 aa).

In terms of domain architecture, Core-binding (CB) spans 16–121 (IMPWYVLDYY…ALSSLYKYLT (106 aa)). Positions 169-354 (AFLDYVDKEY…VNDEQKNALD (186 aa)) constitute a Tyr recombinase domain. Catalysis depends on residues Arg210, Lys234, His306, Arg309, and His332. Tyr341 functions as the O-(3'-phospho-DNA)-tyrosine intermediate in the catalytic mechanism.

This sequence belongs to the 'phage' integrase family. XerS subfamily.

It is found in the cytoplasm. Its activity is regulated as follows. FtsK is required for recombination. In terms of biological role, site-specific tyrosine recombinase, which acts by catalyzing the cutting and rejoining of the recombining DNA molecules. Essential to convert dimers of the bacterial chromosome into monomers to permit their segregation at cell division. In Streptococcus pyogenes serotype M18 (strain MGAS8232), this protein is Tyrosine recombinase XerS.